A 437-amino-acid polypeptide reads, in one-letter code: Adenylosuccinate synthetase (437 aa).

GTP is bound by residues 12 to 18 (GDEGKGK) and 40 to 42 (GHT). D13 serves as the catalytic Proton acceptor. Mg(2+)-binding residues include D13 and G40. Residues 13-16 (DEGK), 38-41 (NAGH), T128, R142, Q223, T238, and R302 contribute to the IMP site. H41 acts as the Proton donor in catalysis. 298 to 304 (TTTGRRR) lines the substrate pocket. GTP contacts are provided by residues R304, 330-332 (KLD), and 412-414 (SLG).

This sequence belongs to the adenylosuccinate synthetase family. Homodimer. Mg(2+) is required as a cofactor.

The protein localises to the cytoplasm. It catalyses the reaction IMP + L-aspartate + GTP = N(6)-(1,2-dicarboxyethyl)-AMP + GDP + phosphate + 2 H(+). The protein operates within purine metabolism; AMP biosynthesis via de novo pathway; AMP from IMP: step 1/2. Plays an important role in the de novo pathway of purine nucleotide biosynthesis. Catalyzes the first committed step in the biosynthesis of AMP from IMP. The protein is Adenylosuccinate synthetase of Prochlorococcus marinus (strain MIT 9211).